The chain runs to 512 residues: Citrate synthase (512 aa).

Active-site residues include His-288, His-327, and Asp-383. The segment at Ala-483–His-512 is disordered. A compositionally biased stretch (polar residues) spans Ala-488–Gln-501.

Belongs to the citrate synthase family.

The protein localises to the cytoplasm. It catalyses the reaction oxaloacetate + acetyl-CoA + H2O = citrate + CoA + H(+). The protein operates within carbohydrate metabolism; tricarboxylic acid cycle; isocitrate from oxaloacetate: step 1/2. The protein is Citrate synthase (gltA) of Dictyostelium discoideum (Social amoeba).